Reading from the N-terminus, the 319-residue chain is Putative protein phosphatase 2C 23 (319 aa).

The region spanning 73 to 314 (AVRMESASCY…DDITVVVACI (242 aa)) is the PPM-type phosphatase domain. Residues Gly-102, Asp-235, and Asp-305 each coordinate Mn(2+).

Belongs to the PP2C family. Requires Mg(2+) as cofactor.

The enzyme catalyses O-phospho-L-seryl-[protein] + H2O = L-seryl-[protein] + phosphate. It catalyses the reaction O-phospho-L-threonyl-[protein] + H2O = L-threonyl-[protein] + phosphate. In Oryza sativa subsp. japonica (Rice), this protein is Putative protein phosphatase 2C 23.